We begin with the raw amino-acid sequence, 340 residues long: Phosphate acyltransferase (340 aa).

Belongs to the PlsX family. As to quaternary structure, homodimer. Probably interacts with PlsY.

It is found in the cytoplasm. It catalyses the reaction a fatty acyl-[ACP] + phosphate = an acyl phosphate + holo-[ACP]. It functions in the pathway lipid metabolism; phospholipid metabolism. Functionally, catalyzes the reversible formation of acyl-phosphate (acyl-PO(4)) from acyl-[acyl-carrier-protein] (acyl-ACP). This enzyme utilizes acyl-ACP as fatty acyl donor, but not acyl-CoA. The protein is Phosphate acyltransferase of Nitrosococcus oceani (strain ATCC 19707 / BCRC 17464 / JCM 30415 / NCIMB 11848 / C-107).